The sequence spans 68 residues: Acylphosphatase (68 aa).

The region spanning 3–68 (RIACTVHGRV…RCTAGLPSAP (66 aa)) is the Acylphosphatase-like domain. Catalysis depends on residues R18 and N36.

The protein belongs to the acylphosphatase family.

The catalysed reaction is an acyl phosphate + H2O = a carboxylate + phosphate + H(+). This is Acylphosphatase (acyP) from Oleidesulfovibrio alaskensis (strain ATCC BAA-1058 / DSM 17464 / G20) (Desulfovibrio alaskensis).